A 319-amino-acid polypeptide reads, in one-letter code: Protein sprouty homolog 1 (319 aa).

N-acetylmethionine is present on M1. The tract at residues T54 to Q157 is disordered. Basic and acidic residues predominate over residues P69–E79. The segment covering S112–S131 has biased composition (low complexity). Residues Q183–C295 enclose the SPR domain.

This sequence belongs to the sprouty family. Forms heterodimers with SPRY2. Interacts with TESK1. Interacts with CAV1 (via C-terminus).

It is found in the cytoplasm. The protein resides in the membrane. Functionally, inhibits fibroblast growth factor (FGF)-induced retinal lens fiber differentiation, probably by inhibiting FGF-mediated phosphorylation of ERK1/2. Inhibits TGFB-induced epithelial-to-mesenchymal transition in lens epithelial cells. The chain is Protein sprouty homolog 1 (SPRY1) from Bos taurus (Bovine).